A 972-amino-acid chain; its full sequence is MATRGHVQDPNDRRLRPIYDYLDNGNNKMAIQQADKLLKKHKDLHCAKVLKAIGLQRTGKQEEAFTLAQEVAALEPTDDNSLQALTILYREMHRPELVTKLYEAAVKKVPNSEEYHSHLFMAYARVGEYKKMQQAGMALYKIVPKNPYYFWSVMSLIMQSISARDENLSKTMFLPLAERMVEKMVKEDKIEAEAEVELYYMILERLGKYQEALDVIRGKLGEKLTSEIQSRENKCMAMYKKLSKWPECNALSRRLLLKNSDDWQFYLTYFDSVFRLIEEAWTPPAEGEHSLEGEVHCSAEDAVKFIEDRITEASQSSRHVRGPHLAKLELIRRLRSQGCNDEYKLGDPEELMFQYFKKFGDKPCCFTDLKVFVDLLPAAQCTQFINQLLGVVPLSTPTEDKLALPADIRGLQQHLCVVQLTRLLGLYHSMDKSQKLDVVKELMLRYQHGLEFGRSCLKTELQFSDYYCLLAVHVLIDVWREAGEETAVWQALTLLEEGLTHSPSNAQFKLLLVRIYCVLGAFEPVVDLYSSLDAKHIQHDTIGYLLTRYAASLGQYAAASQSCNFALRFFHSNQKDTSEYIIQAYKYGAFEKIPEFIAFRNRLNNSLHFAQVRTERMLLDLLLEANISISLAESIKSMNLRPEEDDVPWEDLRDNRDLDVFFSWDPKDRNVSEEHKKLSLEEETMWLRIRSLTLRLISGLPSLTHPVEPKNSEKMSENGVSSRIDILRLLLQQLEVAVETGKRFIEKEIQYPFLGPVPTRMGRFFSSGCCQCQVQSFHLVSDMYELDTSGLEGTVDIQERIENSLASLLELLKGVFSTCKGDLLEVTDGNVKTQPAVLENLVFFVETISVILWVSSYCESVLRPYKLNIQKKKKKKKETSIIMPPIFTSFQDYVTGLQTVISNAVDHIKGLEAHLIALRLEELTLEETSISTEERKFSKTVQGKVQSSYLHSLLETGELLRKRLETTKKLKI.

4 TPR repeats span residues 11–44 (NDRR…HKDL), 45–78 (HCAK…EPTD), 79–112 (DNSL…VPNS), and 114–146 (EYHS…VPKN).

It belongs to the MDM20/NAA25 family. As to quaternary structure, component of the N-terminal acetyltransferase B (NatB) complex which is composed of NAA20 and NAA25.

It localises to the cytoplasm. Its function is as follows. Non-catalytic subunit of the NatB complex which catalyzes acetylation of the N-terminal methionine residues of peptides beginning with Met-Asp, Met-Glu, Met-Asn and Met-Gln. May play a role in normal cell-cycle progression. The sequence is that of N-alpha-acetyltransferase 25, NatB auxiliary subunit (Naa25) from Mus musculus (Mouse).